A 181-amino-acid chain; its full sequence is Trafficking protein particle complex subunit 3-like protein (181 aa).

Cys68 is lipidated: S-palmitoyl cysteine.

This sequence belongs to the TRAPP small subunits family. BET3 subfamily. As to quaternary structure, homodimer. Component of the multisubunit TRAPP (transport protein particle) complex, which includes at least TRAPPC2, TRAPPC2L, TRAPPC3, TRAPPC3L, TRAPPC4, TRAPPC5, TRAPPC8, TRAPPC9, TRAPPC10, TRAPPC11 and TRAPPC12.

It localises to the golgi apparatus. The protein localises to the cis-Golgi network. The protein resides in the endoplasmic reticulum. Its function is as follows. May play a role in vesicular transport from endoplasmic reticulum to Golgi. This is Trafficking protein particle complex subunit 3-like protein (TRAPPC3L) from Homo sapiens (Human).